Here is a 1021-residue protein sequence, read N- to C-terminus: DEKSAGGISVPGPMGPSGPRGLPGPPGAPGPQGFQGPPGEPGEPGASGPMGPRGPPGPPGKNGDDGEAGKPGRPGERGPPGPQGARGLPGTAGLPGMKGHRGFSGLDGAKGDAGPAGPKGEPGSPGENGAPGQMGPRGLPGERGRPGASGPAGARGNDGATGAAGPPGPTGPAGPPGFPGAVGAKGEAGPQGARGSEGPQGVRGEPGPPGPAGAAGPAGNPGADGQPGAKGANGAPGIAGAPGFPGARGPSGPQGPSGAPGPKGNSGEPGAPGNKGDTGAKGEPGPTGIQGPPGPAGEEGKRGARGEPGPTGLPGPPGERGGPGSRGFPGADGIAGPKGPAGERGSPGPAGPKGSPGEAGRPGEAGLPGAKGLTGSPGSPGPDGKTGPPGPAGQDGRPGPAGPPGARGQAGVMGFPGPKGAAGEPGKAGERGVPGPPGAVGPAGKDGEAGAQGPPGPAGPAGERGEQGPAGPGFQGLPGPAGPPGEAGKPGEQGVPGDLGAPGPSGARGERGFPGERGVQGPPGPAGPRGNGAPGNDGAKGDAGAPGAPGSQGAPGLQGMPGERGAAGLPGPKGDRGDAGPKGADGAPGKDGVRGLTGPIGPPGPAGATGDKGEAGPSGPAGPTGARGAPGDRGEPGPPGPAGFAGPPGADGQPGAKGEPGDAGAKGDAGPSGPAGPTGPPGPIGNVGAPGPKGARGSAGPPGATGFPGAAGRVGPPGPSGNAGPPGPPGPVGKEGGKGPRGETGPAGRPGEVGPPGPPGPSGEKGSPGADGPAGAPGTPGPQGIGQRGVVGLPGQRGERGFPGLPGPSGEPGKQGPSGSSGERGPPGPMGPPGLAGPPGEAGREGSPGAEGSPGRDGSPGPKGDRGETGPGPPGAPGAPGAPGPVGPAGKSGDRGETGPSGPAGPAGPAGARGPAGPQGPRGDKGETGEQGDRGIKGHRGFSGLQGPAGPPGSPGEQGPSGASGPAGPRGPPGSAGTPGKDGLNGLPGPIGPPGPRGRTGDAGPVGPPGPPGPPGPPGPP.

Residues 1-1021 are disordered; that stretch reads DEKSAGGISV…PGPPGPPGPP (1021 aa). The residue at position 3 (K3) is an Allysine. Phosphoserine is present on S4. 11 positions are modified to 4-hydroxyproline: P23, P26, P29, P38, P41, P44, P59, P74, P80, P89, and P95. Over residues 31–50 the composition is skewed to low complexity; the sequence is PQGFQGPPGEPGEPGASGPM. The segment covering 62–76 has biased composition (basic and acidic residues); sequence NGDDGEAGKPGRPGE. K98 bears the 5-hydroxylysine; alternate mark. An O-linked (Gal...) hydroxylysine; alternate glycan is attached at K98. The residue at position 104 (S104) is a Phosphoserine. Residues 112–128 show a composition bias toward low complexity; the sequence is DAGPAGPKGEPGSPGEN. A 4-hydroxyproline mark is found at P122, P125, P131, P140, P146, P167, P176, P179, P206, P209, P221, P227, P236, P242, P245, and P260. Low complexity predominate over residues 146 to 164; that stretch reads PGASGPAGARGNDGATGAA. Pro residues predominate over residues 166-178; sequence PPGPTGPAGPPGF. Low complexity predominate over residues 212-262; that stretch reads AGAAGPAGNPGADGQPGAKGANGAPGIAGAPGFPGARGPSGPQGPSGAPGP. Position 263 is a 5-hydroxylysine (K263). 4-hydroxyproline occurs at positions 269, 272, 284, 293, 308, 314, 323, and 329. A compositionally biased stretch (gly residues) spans 318–327; that stretch reads GERGGPGSRG. At K338 the chain carries 5-hydroxylysine. Residues P347, P356, P362, P368, P377, P380, P389, P398, P404, P416, P425, P434, P437, P455, P472, P478, P484, P490, P496, P502, P514, P523, P534, P546, P549, P555, P561, and P570 each carry the 4-hydroxyproline modification. Low complexity predominate over residues 371–425; sequence KGLTGSPGSPGPDGKTGPPGPAGQDGRPGPAGPPGARGQAGVMGFPGPKGAAGEP. Low complexity predominate over residues 484 to 493; sequence PGEAGKPGEQ. Over residues 536–558 the composition is skewed to low complexity; the sequence is NDGAKGDAGAPGAPGSQGAPGLQ. 5-hydroxylysine is present on K582. 4-hydroxyproline occurs at positions 588 and 603. The segment covering 615–629 has biased composition (low complexity); that stretch reads AGPSGPAGPTGARGA. Position 618 is a phosphoserine (S618). P630, P636, P639, P648, P654, P681, and P690 each carry 4-hydroxyproline. Residues 642–672 show a composition bias toward low complexity; it reads AGFAGPPGADGQPGAKGEPGDAGAKGDAGPS. K693 carries the 5-hydroxylysine modification. Residues 698 to 714 show a composition bias toward low complexity; the sequence is SAGPPGATGFPGAAGRV. P702 and P708 each carry 4-hydroxyproline. 3-hydroxyproline is present on P716. 4-hydroxyproline occurs at positions 717, 726, 729, 750, 759, 768, 777, 794, 803, 806, 812, 827, 833, 839, 848, and 854. Positions 743 to 752 are enriched in low complexity; sequence ETGPAGRPGE. The span at 762–777 shows a compositional bias: low complexity; sequence SGEKGSPGADGPAGAP. Pro residues predominate over residues 826 to 836; sequence PPGPMGPPGLA. Residues 838–853 are compositionally biased toward low complexity; that stretch reads PPGEAGREGSPGAEGS. K863 is modified (5-hydroxylysine). The span at 871-886 shows a compositional bias: pro residues; that stretch reads PGPPGAPGAPGAPGPV. 4-hydroxyproline occurs at positions 874, 877, and 880. Over residues 907-921 the composition is skewed to low complexity; it reads AGPAGARGPAGPQGP. Positions 922-936 are enriched in basic and acidic residues; sequence RGDKGETGEQGDRGI. Position 925 is a 5-hydroxylysine (K925). The residue at position 937 (K937) is a 5-hydroxylysine; alternate. A glycan (O-linked (Gal...) hydroxylysine; alternate) is linked at K937. Residues P952, P955, P973, and P988 each carry the 4-hydroxyproline modification. Residues 955–988 are compositionally biased toward low complexity; sequence PGEQGPSGASGPAGPRGPPGSAGTPGKDGLNGLP. The residue at position 993 (P993) is a 3-hydroxyproline. 4-hydroxyproline is present on P994. Positions 1006-1021 are enriched in pro residues; sequence VGPPGPPGPPGPPGPP. At P1008 the chain carries 3-hydroxyproline. P1009 bears the 4-hydroxyproline mark. P1011 carries the post-translational modification 3-hydroxyproline. P1012 is subject to 4-hydroxyproline. Residue P1014 is modified to 3-hydroxyproline. 3 positions are modified to 4-hydroxyproline: P1015, P1018, and P1021.

Belongs to the fibrillar collagen family. In terms of assembly, trimers of one alpha 2(I) and two alpha 1(I) chains. Post-translationally, contains mostly 4-hydroxyproline. Proline residues at the third position of the tripeptide repeating unit (G-X-Y) are hydroxylated in some or all of the chains. In terms of processing, contains 3-hydroxyproline at a few sites. This modification occurs on the first proline residue in the sequence motif Gly-Pro-Hyp, where Hyp is 4-hydroxyproline. Lysine residues at the third position of the tripeptide repeating unit (G-X-Y) are 5-hydroxylated in some or all of the chains. Post-translationally, O-glycosylated on hydroxylated lysine residues. The O-linked glycan consists of a Glc-Gal disaccharide. As to expression, expressed in bones.

It is found in the secreted. Its subcellular location is the extracellular space. The protein localises to the extracellular matrix. Functionally, type I collagen is a member of group I collagen (fibrillar forming collagen). In Doedicurus sp. (South American giant glyptodont), this protein is Collagen alpha-1(I) chain.